A 569-amino-acid chain; its full sequence is Protein germ cell-less (569 aa).

Positions 17 to 43 (SNRRKRKRSTDSSLGKDDPAQLDTTQP) are disordered. Residues 66 to 136 (SDVAVMALDK…MYSDEIEIES (71 aa)) form the BTB domain. The tract at residues 517 to 553 (GANSDRPLSPSSADDSAVFIGDSEPSTPSSPAPRPRI) is disordered.

It is found in the cytoplasm. Required for the specification of pole cells and germ cell formation. Mothers with reduced glc function give rise to sterile adult progeny that lack germ cells. The chain is Protein germ cell-less (gcl) from Drosophila melanogaster (Fruit fly).